The primary structure comprises 151 residues: UPF0178 protein YaiI (151 aa).

Belongs to the UPF0178 family.

The polypeptide is UPF0178 protein YaiI (Salmonella arizonae (strain ATCC BAA-731 / CDC346-86 / RSK2980)).